The following is a 156-amino-acid chain: Arginine repressor (156 aa).

This sequence belongs to the ArgR family.

Its subcellular location is the cytoplasm. It participates in amino-acid biosynthesis; L-arginine biosynthesis [regulation]. In terms of biological role, regulates arginine biosynthesis genes. The chain is Arginine repressor from Photorhabdus laumondii subsp. laumondii (strain DSM 15139 / CIP 105565 / TT01) (Photorhabdus luminescens subsp. laumondii).